A 372-amino-acid chain; its full sequence is 4-hydroxy-3-methylbut-2-en-1-yl diphosphate synthase (flavodoxin) (372 aa).

[4Fe-4S] cluster-binding residues include Cys-270, Cys-273, Cys-305, and Glu-312.

Belongs to the IspG family. Requires [4Fe-4S] cluster as cofactor.

The catalysed reaction is (2E)-4-hydroxy-3-methylbut-2-enyl diphosphate + oxidized [flavodoxin] + H2O + 2 H(+) = 2-C-methyl-D-erythritol 2,4-cyclic diphosphate + reduced [flavodoxin]. It functions in the pathway isoprenoid biosynthesis; isopentenyl diphosphate biosynthesis via DXP pathway; isopentenyl diphosphate from 1-deoxy-D-xylulose 5-phosphate: step 5/6. Functionally, converts 2C-methyl-D-erythritol 2,4-cyclodiphosphate (ME-2,4cPP) into 1-hydroxy-2-methyl-2-(E)-butenyl 4-diphosphate. This chain is 4-hydroxy-3-methylbut-2-en-1-yl diphosphate synthase (flavodoxin), found in Vibrio vulnificus (strain CMCP6).